A 541-amino-acid polypeptide reads, in one-letter code: CRISPR-associated exonuclease Cas4/endonuclease Cas1 fusion (541 aa).

The CRISPR-associated exonuclease Cas4 stretch occupies residues 1–179 (MGIHSLLYCE…NCSLAPVCLP (179 aa)). C9 is a binding site for [4Fe-4S] cluster. Positions 65 and 78 each coordinate Mn(2+). [4Fe-4S] cluster-binding residues include C168, C171, and C177. The CRISPR-associated endonuclease Cas1 stretch occupies residues 204 to 541 (TLHVFGHDSR…ANIFAQARLR (338 aa)). Mn(2+) contacts are provided by E365, H433, and E448.

The protein in the N-terminal section; belongs to the CRISPR-associated exonuclease Cas4 family. This sequence in the C-terminal section; belongs to the CRISPR-associated endonuclease Cas1 family. Homodimer, forms a heterotetramer with a Cas2 homodimer. The cofactor is [4Fe-4S] cluster. Mg(2+) is required as a cofactor. Requires Mn(2+) as cofactor.

It carries out the reaction exonucleolytic cleavage in the 5'- to 3'-direction to yield nucleoside 3'-phosphates.. CRISPR (clustered regularly interspaced short palindromic repeat), is an adaptive immune system that provides protection against mobile genetic elements (viruses, transposable elements and conjugative plasmids). CRISPR clusters contain spacers, sequences complementary to antecedent mobile elements, and target invading nucleic acids. CRISPR clusters are transcribed and processed into CRISPR RNA (crRNA). The Cas4 region acts as a ssDNA exonuclease, while the Cas1 region acts as a dsDNA endonuclease. Involved in the integration of spacer DNA into the CRISPR cassette. This Leptospira interrogans serogroup Icterohaemorrhagiae serovar Lai (strain 56601) protein is CRISPR-associated exonuclease Cas4/endonuclease Cas1 fusion (cas4-cas1).